A 379-amino-acid polypeptide reads, in one-letter code: Transcription termination factor 1a, mitochondrial (379 aa).

The transit peptide at 1-37 (MASRNIWCVRRNFLFDLRDWMLQYSAEVFLKSISFRP) directs the protein to the mitochondrion. Interaction with DNA stretches follow at residues 151–152 (RS), 229–233 (QSTKR), 306–313 (SEKKFNDK), 337–340 (SINT), and 366–373 (SQRRYEAK).

Belongs to the mTERF family. In terms of assembly, monomer. Post-translationally, phosphoprotein with mostly four phosphate groups. While the DNA-binding activity is unaffected by the phosphorylation state, only the phosphorylated form of the protein is active for termination activity. Functioning seems to be regulated by phosphorylation. In terms of tissue distribution, predominantly expressed in heart and liver, with extremely low levels in other tissues. Expressed strongly in the heart and at lower levels in brain, liver and kidney.

It localises to the mitochondrion. In terms of biological role, transcription termination factor. Binds to a 28 bp region within the tRNA(Leu(uur)) gene at a position immediately adjacent to and downstream of the 16S rRNA gene; this region comprises a tridecamer sequence critical for directing accurate termination. Binds DNA along the major grove and promotes DNA bending and partial unwinding. Promotes base flipping. Transcription termination activity appears to be polarized with highest specificity for transcripts initiated on the light strand. The protein is Transcription termination factor 1a, mitochondrial (Mterf1a) of Mus musculus (Mouse).